The chain runs to 1495 residues: DNA-directed RNA polymerase subunit 1 (1495 aa).

This sequence belongs to the RNA polymerase beta' chain family.

The protein resides in the virion. The enzyme catalyses RNA(n) + a ribonucleoside 5'-triphosphate = RNA(n+1) + diphosphate. DNA-dependent RNA polymerase catalyzes the transcription of DNA into RNA using the four ribonucleoside triphosphates as substrates. This Acanthamoeba polyphaga (Amoeba) protein is DNA-directed RNA polymerase subunit 1 (RPO1).